Reading from the N-terminus, the 279-residue chain is MQLCGFEVGIDQPLFLIAGPCVIESQEMAIETAGQLKEITTALGINFIYKSSYDKANRSSNKTFRGFGMDEGLKILDEVRRQVGVPILTDVHTEAQVPHVAAVVDVLQTPAFLCRQTDFITACAQSGKPVNIKKGQFLAPGDMKQVVQKAKEANGGADTIMVCERGASFGYNTLISDMRGLAIMRETNCPVVFDATHSVQQPGGQGDKSGGQREFVPVLARAAVASGVAGVFMETHPDPAQALSDGPNAWPLSKMKALLEVLVDLDRVVKKAGFIEHTV.

This sequence belongs to the KdsA family.

It is found in the cytoplasm. The enzyme catalyses D-arabinose 5-phosphate + phosphoenolpyruvate + H2O = 3-deoxy-alpha-D-manno-2-octulosonate-8-phosphate + phosphate. It functions in the pathway carbohydrate biosynthesis; 3-deoxy-D-manno-octulosonate biosynthesis; 3-deoxy-D-manno-octulosonate from D-ribulose 5-phosphate: step 2/3. The protein operates within bacterial outer membrane biogenesis; lipopolysaccharide biosynthesis. The sequence is that of 2-dehydro-3-deoxyphosphooctonate aldolase from Methylobacillus flagellatus (strain ATCC 51484 / DSM 6875 / VKM B-1610 / KT).